A 149-amino-acid chain; its full sequence is Myoglobin (149 aa).

Valine 2 is modified (N-acetylvaline). In terms of domain architecture, Globin spans 2 to 143 (VDWEKVNSVW…ICSDIEKEYK (142 aa)). Residue histidine 89 participates in heme b binding.

Belongs to the globin family. In terms of assembly, monomeric.

Its subcellular location is the cytoplasm. It localises to the sarcoplasm. It catalyses the reaction Fe(III)-heme b-[protein] + nitric oxide + H2O = Fe(II)-heme b-[protein] + nitrite + 2 H(+). The catalysed reaction is H2O2 + AH2 = A + 2 H2O. Its function is as follows. Monomeric heme protein which primary function is to store oxygen and facilitate its diffusion within muscle tissues. Reversibly binds oxygen through a pentacoordinated heme iron and enables its timely and efficient release as needed during periods of heightened demand. Depending on the oxidative conditions of tissues and cells, and in addition to its ability to bind oxygen, it also has a nitrite reductase activity whereby it regulates the production of bioactive nitric oxide. Under stress conditions, like hypoxia and anoxia, it also protects cells against reactive oxygen species thanks to its pseudoperoxidase activity. This Mustelus antarcticus (Gummy shark) protein is Myoglobin (mb).